Consider the following 313-residue polypeptide: Olfactory receptor 4M2 (313 aa).

Over 1-25 (METANYTKVTEFVLTGLSQTPEVQL) the chain is Extracellular. An N-linked (GlcNAc...) asparagine glycan is attached at Asn-5. The chain crosses the membrane as a helical span at residues 26–49 (VLFVIFLSFYLFILPGNILIICTI). Residues 50–57 (SLDPHLTS) are Cytoplasmic-facing. A helical membrane pass occupies residues 58–79 (PMYFLLANLAFLDIWYSSITAP). At 80–100 (EMLIDFFVERKIISFDGCIAQ) the chain is on the extracellular side. A disulfide bond links Cys-97 and Cys-189. A helical transmembrane segment spans residues 101 to 120 (LFFLHFAGASEMFLLTVMAF). Topologically, residues 121–139 (DLYTAICRPLHYATIMNQR) are cytoplasmic. Residues 140-158 (LCCILVALSWRGGFIHSII) form a helical membrane-spanning segment. Residues 159 to 195 (QVALIVRLPFCGPNELDSYFCDITQVVRIACANTFPE) are Extracellular-facing. The chain crosses the membrane as a helical span at residues 196–219 (ELVMICSSGLISVVCLIALLMSYA). Residues 220-237 (FLLALFKKLSGSGENTNR) lie on the Cytoplasmic side of the membrane. A helical membrane pass occupies residues 238 to 260 (AMSTCYSHITIVVLMFGPSIYIY). The Extracellular portion of the chain corresponds to 261–271 (ARPFDSFSLDK). Residues 272–291 (VVSVFNTLIFPLRNPIIYTL) traverse the membrane as a helical segment. Over 292–313 (RNKEVKAAMRKLVTKYILCKEK) the chain is Cytoplasmic.

Belongs to the G-protein coupled receptor 1 family.

The protein resides in the cell membrane. Odorant receptor. This is Olfactory receptor 4M2 (OR4M2) from Homo sapiens (Human).